Here is a 497-residue protein sequence, read N- to C-terminus: Tripartite motif-containing protein 5 (497 aa).

Ala2 bears the N-acetylalanine mark. Residues 15–60 form an RING-type zinc finger; it reads CPICLELLTEPLSLHCGHSFCQACITANHKKSMLYKEGERSCPVCR. The residue at position 87 (Ser87) is a Phosphoserine. Residues 92–133 form a B box-type zinc finger; it reads QKVDHCARHGEKLLLFCQEDSKVICWLCERSQEHRGHHTFLM. Residues Cys97, His100, Cys119, and His125 each contribute to the Zn(2+) site. A coiled-coil region spans residues 137–225; sequence AQEYHVKLQT…LTKSETEMVQ (89 aa). Residues 187–200 are required for interaction with GABARAP and for autophagy; sequence FEQLREILDWEESN. In terms of domain architecture, B30.2/SPRY spans 283–497; sequence LKGMLDMFRE…VPMTLCSPSS (215 aa).

It belongs to the TRIM/RBCC family. Can form homodimers and homotrimers. In addition to lower-order dimerization, also exhibits a higher-order multimerization and both low- and high-order multimerizations are essential for its restriction activity. Interacts with MAP3K7/TAK1, TAB2 and TAB3. Interacts with HSPA8/HSC70, PSMC2, PSMC4, PSMC5 and PSMD7. Interacts with SQSTM1. Interacts (via B30.2/SPRY domain) with HSPA1A/B. Interacts with TRIM6 and TRIM34. Interacts with BECN1; GABARAP. Interacts with ULK1 (phosphorylated form), GABARAPL1, GABARAPL2, MAP1LC3A and MAP1LC3C. Degraded in a proteasome-independent fashion in the absence of viral infection but in a proteasome-dependent fashion following exposure to restriction sensitive virus. Post-translationally, autoubiquitinated in a RING finger- and UBE2D2-dependent manner. Monoubiquitinated by TRIM21. Deubiquitinated by Yersinia YopJ. Ubiquitination may not lead to proteasomal degradation.

The protein resides in the cytoplasm. It is found in the nucleus. The enzyme catalyses S-ubiquitinyl-[E2 ubiquitin-conjugating enzyme]-L-cysteine + [acceptor protein]-L-lysine = [E2 ubiquitin-conjugating enzyme]-L-cysteine + N(6)-ubiquitinyl-[acceptor protein]-L-lysine.. Its pathway is protein modification; protein ubiquitination. Capsid-specific restriction factor that prevents infection from non-host-adapted retroviruses. Blocks viral replication early in the life cycle, after viral entry but before reverse transcription. In addition to acting as a capsid-specific restriction factor, also acts as a pattern recognition receptor that activates innate immune signaling in response to the retroviral capsid lattice. Binding to the viral capsid triggers its E3 ubiquitin ligase activity, and in concert with the heterodimeric ubiquitin conjugating enzyme complex UBE2V1-UBE2N (also known as UBC13-UEV1A complex) generates 'Lys-63'-linked polyubiquitin chains, which in turn are catalysts in the autophosphorylation of the MAP3K7/TAK1 complex (includes TAK1, TAB2, and TAB3). Activation of the MAP3K7/TAK1 complex by autophosphorylation results in the induction and expression of NF-kappa-B and MAPK-responsive inflammatory genes, thereby leading to an innate immune response in the infected cell. Restricts infection by human immunodeficiency virus type 1 (HIV-1) and simian immunodeficiency virus (SIV-agm). Plays a role in regulating autophagy through activation of autophagy regulator BECN1 by causing its dissociation from its inhibitors BCL2 and TAB2. Also plays a role in autophagy by acting as a selective autophagy receptor which recognizes and targets HIV-1 capsid protein p24 for autophagic destruction. The protein is Tripartite motif-containing protein 5 (TRIM5) of Macaca mulatta (Rhesus macaque).